The sequence spans 301 residues: Zinc finger protein 346 (301 aa).

2 Matrin-type zinc fingers span residues 55 to 85 (SQCKVCSAVLISESQKLAHYQSKKHASKVRR) and 117 to 141 (KACSVCNMTFSSPVVAQSHYQGKVH). Positions 57, 60, 73, 79, 119, 122, 135, and 141 each coordinate Zn(2+). Residues 151 to 177 (GSQTPALPQPEAQAKKDDGMQGPAEQD) are disordered. 2 Matrin-type zinc fingers span residues 180 to 210 (RFCSICQASFNNPLMAQQHYSGKKHKKHMNK) and 230 to 257 (YPCTVCNIELNSVEQYQAHISGSKHKNH). The disordered stretch occupies residues 250–283 (SGSKHKNHAKPKKGPNAFAPPPDNYQPDYQYPTN). A compositionally biased stretch (basic residues) spans 251–262 (GSKHKNHAKPKK).

The protein localises to the nucleus. It localises to the cytoplasm. Its function is as follows. Binds preferentially to dsRNA, but also to RNA-DNA hybrids. The protein is Zinc finger protein 346 of Danio rerio (Zebrafish).